A 507-amino-acid chain; its full sequence is (6-4) photolyase (507 aa).

6,7-dimethyl-8-(1-D-ribityl)lumazine contacts are provided by residues 9–10, 32–40, and Gly-105; these read GD and CEVMAEASY. Residues 265–269 and Asn-273 each bind FAD; that span reads HSLLS. Residue Cys-350 coordinates [4Fe-4S] cluster. Residues 363–366, Asp-397, and Asn-406 each bind FAD; that span reads YAHH. [4Fe-4S] cluster-binding residues include Cys-438, Cys-441, and Cys-454.

The protein belongs to the iron-sulfur bacterial cryptochrome/photolyase (FeS-BCP) family. FAD is required as a cofactor. Requires 6,7-dimethyl-8-(1-D-ribityl)lumazine as cofactor. It depends on [4Fe-4S] cluster as a cofactor.

The enzyme catalyses (6-4) photoproduct (in DNA) = 2 pyrimidine residues (in DNA).. Photolyase involved in the repair of UV-induced (6-4) lesions in DNA. Catalyzes the photoreactivation of (6-4) pyrimidine-pyrimidone photoproducts by using blue-light energy. Can repair (6-4) photoproducts in ssDNA as well as in dsDNA. This chain is (6-4) photolyase, found in Agrobacterium fabrum (strain C58 / ATCC 33970) (Agrobacterium tumefaciens (strain C58)).